The following is a 529-amino-acid chain: Cytochrome P450 monooxygenase patI (529 aa).

Topologically, residues 1-8 (MDFTQVPP) are cytoplasmic. Residues 9–25 (SYILGVLLSSTSILFCL) form a helical membrane-spanning segment. Residues 26–529 (KYLLRSGYRP…EAQGVFSRFD (504 aa)) are Lumenal-facing. N-linked (GlcNAc...) asparagine glycans are attached at residues asparagine 81 and asparagine 383. Position 449 (cysteine 449) interacts with heme.

The protein belongs to the cytochrome P450 family. Requires heme as cofactor.

Its subcellular location is the endoplasmic reticulum membrane. The enzyme catalyses 3-hydroxybenzyl alcohol + reduced [NADPH--hemoprotein reductase] + O2 = gentisyl alcohol + oxidized [NADPH--hemoprotein reductase] + H2O + H(+). It functions in the pathway mycotoxin biosynthesis; patulin biosynthesis. Its function is as follows. Cytochrome P450 monooxygenase; part of the gene cluster that mediates the biosynthesis of patulin, an acetate-derived tetraketide mycotoxin produced by several fungal species that shows antimicrobial properties against several bacteria. PatI catalyzes the conversion of m-hydroxybenzyl alcohol into gentisyl alcohol. The pathway begins with the synthesis of 6-methylsalicylic acid by the polyketide synthase (PKS) patK via condensation of acetate and malonate units. The 6-methylsalicylic acid decarboxylase patG then catalyzes the decarboxylation of 6-methylsalicylic acid to yield m-cresol (also known as 3-methylphenol). These first reactions occur in the cytosol. The intermediate m-cresol is then transported into the endoplasmic reticulum where the cytochrome P450 monooxygenase patH converts it to m-hydroxybenzyl alcohol, which is further converted to gentisyl alcohol by the cytochrome P450 monooxygenase patI. The oxidoreductases patJ and patO further convert gentisyl alcohol to isoepoxydon in the vacuole. PatN catalyzes then the transformation of isoepoxydon into phyllostine. The cluster protein patF is responsible for the conversion from phyllostine to neopatulin whereas the alcohol dehydrogenase patD converts neopatulin to E-ascladiol. The steps between isoepoxydon and E-ascladiol occur in the cytosol, and E-ascladiol is probably secreted to the extracellular space by one of the cluster-specific transporters patC or patM. Finally, the secreted patulin synthase patE catalyzes the conversion of E-ascladiol to patulin. In Aspergillus clavatus (strain ATCC 1007 / CBS 513.65 / DSM 816 / NCTC 3887 / NRRL 1 / QM 1276 / 107), this protein is Cytochrome P450 monooxygenase patI.